Reading from the N-terminus, the 99-residue chain is NADH-quinone oxidoreductase subunit K (99 aa).

A run of 3 helical transmembrane segments spans residues P3 to L23, I28 to F48, and M59 to I79.

This sequence belongs to the complex I subunit 4L family. In terms of assembly, NDH-1 is composed of 14 different subunits. Subunits NuoA, H, J, K, L, M, N constitute the membrane sector of the complex.

It localises to the cell membrane. It carries out the reaction a quinone + NADH + 5 H(+)(in) = a quinol + NAD(+) + 4 H(+)(out). Functionally, NDH-1 shuttles electrons from NADH, via FMN and iron-sulfur (Fe-S) centers, to quinones in the respiratory chain. The immediate electron acceptor for the enzyme in this species is believed to be a menaquinone. Couples the redox reaction to proton translocation (for every two electrons transferred, four hydrogen ions are translocated across the cytoplasmic membrane), and thus conserves the redox energy in a proton gradient. This is NADH-quinone oxidoreductase subunit K from Mycobacterium bovis (strain ATCC BAA-935 / AF2122/97).